Reading from the N-terminus, the 856-residue chain is 3-hydroxy-3-methylglutaryl-coenzyme A reductase (856 aa).

4 helical membrane passes run 12-32, 89-109, 123-143, and 190-210; these read FCAS…VCML, ILGI…SSVI, LFFF…QFAL, and VLCC…MTFY. Asn326 carries N-linked (GlcNAc...) asparagine glycosylation. The chain crosses the membrane as a helical span at residues 344–364; sequence SADHIVILILLLALAVKFVFF. The interval 365 to 443 is linker; it reads ETRDELTTTR…CEVMALVTSG (79 aa). Asn412 carries N-linked (GlcNAc...) asparagine glycosylation. The segment at 443–771 is catalytic; it reads GHIAGYQLEK…SCTMPSIEIG (329 aa). Residues Glu528 and Lys659 each act as charge relay system in the active site. Residue Asn700 is glycosylated (N-linked (GlcNAc...) asparagine). The Charge relay system role is filled by Asp735. His834 acts as the Proton donor in catalysis. The segment at 836-856 is disordered; the sequence is RHNRSSVSTSGSEPSTPACKS. A glycan (N-linked (GlcNAc...) asparagine) is linked at Asn838. Positions 840-856 are enriched in low complexity; that stretch reads SSVSTSGSEPSTPACKS.

This sequence belongs to the HMG-CoA reductase family.

The protein localises to the endoplasmic reticulum membrane. The catalysed reaction is (R)-mevalonate + 2 NADP(+) + CoA = (3S)-3-hydroxy-3-methylglutaryl-CoA + 2 NADPH + 2 H(+). The protein operates within metabolic intermediate biosynthesis; (R)-mevalonate biosynthesis; (R)-mevalonate from acetyl-CoA: step 3/3. Its activity is regulated as follows. The activity of HMG-CoA-reductase is suppressed by exogenous mevalonate. Functionally, synthesis of mevalonate for the production of non-sterol isoprenoids, which are essential for growth differentiation. This Blattella germanica (German cockroach) protein is 3-hydroxy-3-methylglutaryl-coenzyme A reductase.